We begin with the raw amino-acid sequence, 604 residues long: Protein TAX4 (604 aa).

Disordered stretches follow at residues 38 to 77 (HPNGNAGSAERPRHLKVESAPVVKSEPSLPRMRQPEPRSI), 133 to 249 (FSNR…RQQE), 267 to 300 (GTLPDLIPRSQRKTSKPRFKHKLLRSPEQQQENL), 338 to 380 (DETF…KGLK), and 394 to 428 (PFPHHHHHHHQLHNPNSHHLHTHHHTSSHKFNEDK). Residues 176-185 (YDNNVRSRSI) are compositionally biased toward polar residues. Composition is skewed to low complexity over residues 186–203 (SPQVSYSTSLSSSCSISS) and 224–240 (SMSSYSLASKASAKASL). Basic residues-rich tracts occupy residues 276-290 (SQRKTSKPRFKHKLL), 366-379 (KKKKSRRSKIKKGL), and 396-421 (PHHHHHHHQLHNPNSHHLHTHHHTSS). Residues 469 to 559 (ANEDDESHLQ…RVWNSVDGYV (91 aa)) enclose the EH domain.

Belongs to the IRS4 family. Interacts with INP51.

Functionally, with IRS4, acts as a positive regulator of INP51 activity and phosphatidylinositol 4,5-bisphosphate turnover. Negatively regulates signaling through the cell integrity pathway, including the MAP kinase SLT2. The protein is Protein TAX4 (TAX4) of Saccharomyces cerevisiae (strain YJM789) (Baker's yeast).